We begin with the raw amino-acid sequence, 346 residues long: Anthocyanidin 3-O-glucosyltransferase 2 (346 aa).

7 residues coordinate UDP-alpha-D-glucose: A221, Q223, H238, W241, N242, S243, and E246. An an anthocyanidin-binding site is contributed by A261. The UDP-alpha-D-glucose site is built by E262 and Q263.

This sequence belongs to the UDP-glycosyltransferase family. As to expression, expressed in cotyledons, roots and leaves.

The catalysed reaction is an anthocyanidin + UDP-alpha-D-glucose + H(+) = an anthocyanidin 3-O-beta-D-glucoside + UDP. Its pathway is pigment biosynthesis; anthocyanin biosynthesis. Its function is as follows. In the presence of other necessary color factors, this glycosylation reaction allows the accumulation of anthocyanin pigments. The polypeptide is Anthocyanidin 3-O-glucosyltransferase 2 (GT2) (Manihot esculenta (Cassava)).